A 35-amino-acid polypeptide reads, in one-letter code: Natriuretic peptide TNPa (35 aa).

Cysteine 9 and cysteine 25 are joined by a disulfide.

Expressed by the venom gland.

The protein localises to the secreted. Its function is as follows. Snake venom natriuretic peptide that exhibits vasoactive and probable hypotensive activity. Is only weakly active on natriuretic peptide receptor-C (NPR3). Stimulates cGMP production through the natriuretic peptide receptor 1 (NPR1) with moderate potencies for the rat NPR1 (EC(50)=2020 nM), and very weak potencies over human NPR1 (15% activation at 10 uM). In vivo, does not impact systolic and diastolic blood pressure, as well as heart rate, when intravenously injected in conscious rabbits. Does not affect the bradycardia due to cardiac afferent stimulation (Bezold-Jarisch reflex). This Oxyuranus microlepidotus (Inland taipan) protein is Natriuretic peptide TNPa.